A 268-amino-acid chain; its full sequence is Ribonuclease P protein subunit p30 (268 aa).

Ala2 is modified (N-acetylalanine). Ser251 is subject to Phosphoserine.

The protein belongs to the eukaryotic/archaeal RNase P protein component 3 family. Component of nuclear RNase P and RNase MRP ribonucleoproteins. RNase P consists of a catalytic RNA moiety and about 10 protein subunits; POP1, POP4, POP5, POP7, RPP14, RPP21, RPP25, RPP30, RPP38 and RPP40. Within the RNase P complex, POP1, POP7 and RPP25 form the 'finger' subcomplex, POP5, RPP14, RPP40 and homodimeric RPP30 form the 'palm' subcomplex, and RPP21, POP4 and RPP38 form the 'wrist' subcomplex. All subunits of the RNase P complex interact with the catalytic RNA. Several subunits of RNase P are also part of the RNase MRP complex. RNase MRP consists of a catalytic RNA moiety and about 8 protein subunits; POP1, POP7, RPP25, RPP30, RPP38, RPP40 and possibly also POP4 and POP5.

It is found in the nucleus. Its subcellular location is the nucleolus. Component of ribonuclease P, a ribonucleoprotein complex that generates mature tRNA molecules by cleaving their 5'-ends. Also a component of the MRP ribonuclease complex, which cleaves pre-rRNA sequences. This chain is Ribonuclease P protein subunit p30 (RPP30), found in Bos taurus (Bovine).